A 966-amino-acid chain; its full sequence is RNA polymerase-associated protein RapA (966 aa).

The Helicase ATP-binding domain maps to 163-337 (EVGQRLHPRV…FARLKLLDAD (175 aa)). 176-183 (DEVGLGKT) provides a ligand contact to ATP. The DEAH box signature appears at 283–286 (DEAH). Positions 488–642 (RVEWLITFLK…ICPMGMALFE (155 aa)) constitute a Helicase C-terminal domain.

The protein belongs to the SNF2/RAD54 helicase family. RapA subfamily. Interacts with the RNAP. Has a higher affinity for the core RNAP than for the holoenzyme. Its ATPase activity is stimulated by binding to RNAP.

Its function is as follows. Transcription regulator that activates transcription by stimulating RNA polymerase (RNAP) recycling in case of stress conditions such as supercoiled DNA or high salt concentrations. Probably acts by releasing the RNAP, when it is trapped or immobilized on tightly supercoiled DNA. Does not activate transcription on linear DNA. Probably not involved in DNA repair. This Actinobacillus succinogenes (strain ATCC 55618 / DSM 22257 / CCUG 43843 / 130Z) protein is RNA polymerase-associated protein RapA.